A 287-amino-acid polypeptide reads, in one-letter code: F420-non-reducing hydrogenase vhu subunit G (287 aa).

It belongs to the [NiFe]/[NiFeSe] hydrogenase small subunit family. The F420-non-reducing hydrogenase vhu is composed of four subunits; VhuA, VhuD, VhuG and VhuU.

This chain is F420-non-reducing hydrogenase vhu subunit G (vhuG), found in Methanococcus voltae.